The chain runs to 62 residues: Large ribosomal subunit protein uL30 (62 aa).

The protein belongs to the universal ribosomal protein uL30 family. As to quaternary structure, part of the 50S ribosomal subunit.

This chain is Large ribosomal subunit protein uL30, found in Beutenbergia cavernae (strain ATCC BAA-8 / DSM 12333 / CCUG 43141 / JCM 11478 / NBRC 16432 / NCIMB 13614 / HKI 0122).